Consider the following 423-residue polypeptide: AP-1 complex subunit mu-2 (423 aa).

An MHD domain is found at 168 to 421 (KNEVFIDVIE…ITQSGDYQLR (254 aa)).

The protein belongs to the adaptor complexes medium subunit family. In terms of assembly, adaptor protein complex 1 (AP-1) is a heterotetramer composed of two large adaptins (gamma-type subunit AP1G1 and beta-type subunit AP1B1), a medium adaptin (mu-type subunit AP1M1 or AP1M2) and a small adaptin (sigma-type subunit AP1S1 or AP1S2 or AP1S3). Interacts with P2X4. Post-translationally, phosphorylation of membrane-bound AP1M1/AP1M2 increases its affinity for sorting signals.

The protein localises to the golgi apparatus. The protein resides in the cytoplasmic vesicle. It is found in the clathrin-coated vesicle membrane. Subunit of clathrin-associated adaptor protein complex 1 that plays a role in protein sorting in the trans-Golgi network (TGN) and endosomes. The AP complexes mediate the recruitment of clathrin to membranes and the recognition of sorting signals within the cytosolic tails of transmembrane cargo molecules. This is AP-1 complex subunit mu-2 (Ap1m2) from Rattus norvegicus (Rat).